The sequence spans 258 residues: MEVIAKKRFGQNFLINKAIQKAIVDVACVDDENVIEIGPGLGALTDLIKELSKELIAYEIDNDLFKKLLVENQNSNVRFINEDFLNATFDEKKEWVVIGNIPYNITSEILFKLIENHSILKKATLMVQDEVANRLVAMPKTKEYSKLTVSVNFVGNVKKHFVVKASNFNPAPKVDSAIITIDFYKSLPYNLKKVLAFIKQIFAFKRKMLINNLVPQWPKADVIWAIEQIGHKQTTRAEELSLQEIMKLYEILVNSKSN.

Residues N12, L14, G38, E59, D83, and N100 each contribute to the S-adenosyl-L-methionine site.

This sequence belongs to the class I-like SAM-binding methyltransferase superfamily. rRNA adenine N(6)-methyltransferase family. RsmA subfamily.

Its subcellular location is the cytoplasm. It carries out the reaction adenosine(1518)/adenosine(1519) in 16S rRNA + 4 S-adenosyl-L-methionine = N(6)-dimethyladenosine(1518)/N(6)-dimethyladenosine(1519) in 16S rRNA + 4 S-adenosyl-L-homocysteine + 4 H(+). Specifically dimethylates two adjacent adenosines (A1518 and A1519) in the loop of a conserved hairpin near the 3'-end of 16S rRNA in the 30S particle. May play a critical role in biogenesis of 30S subunits. This Metamycoplasma arthritidis (strain 158L3-1) (Mycoplasma arthritidis) protein is Ribosomal RNA small subunit methyltransferase A.